Consider the following 351-residue polypeptide: Molybdenum import ATP-binding protein ModC (351 aa).

The ABC transporter domain occupies 1–229; sequence MLEINIHQQL…DILADWQSET (229 aa). Position 31–38 (31–38) interacts with ATP; the sequence is GRSGAGKS. The region spanning 290 to 351 is the Mop domain; the sequence is HSSIRNILNG…IYVQIKSVSL (62 aa).

It belongs to the ABC transporter superfamily. Molybdate importer (TC 3.A.1.8) family. As to quaternary structure, the complex is composed of two ATP-binding proteins (ModC), two transmembrane proteins (ModB) and a solute-binding protein (ModA).

It is found in the cell inner membrane. It carries out the reaction molybdate(out) + ATP + H2O = molybdate(in) + ADP + phosphate + H(+). In terms of biological role, part of the ABC transporter complex ModABC involved in molybdenum import. Responsible for energy coupling to the transport system. The chain is Molybdenum import ATP-binding protein ModC from Haemophilus ducreyi (strain 35000HP / ATCC 700724).